The chain runs to 242 residues: Small ribosomal subunit protein uS2 (242 aa).

Belongs to the universal ribosomal protein uS2 family.

This chain is Small ribosomal subunit protein uS2, found in Shewanella pealeana (strain ATCC 700345 / ANG-SQ1).